Reading from the N-terminus, the 346-residue chain is uncharacterized protein (346 aa).

A disordered region spans residues 321–346; the sequence is TPWGTHSVAGVGPPPYARSGPASATT.

This is an uncharacterized protein from Mycobacterium tuberculosis (strain CDC 1551 / Oshkosh).